The sequence spans 883 residues: Alanine--tRNA ligase (883 aa).

The Zn(2+) site is built by His-564, His-568, Cys-666, and His-670.

The protein belongs to the class-II aminoacyl-tRNA synthetase family. The cofactor is Zn(2+).

The protein localises to the cytoplasm. It catalyses the reaction tRNA(Ala) + L-alanine + ATP = L-alanyl-tRNA(Ala) + AMP + diphosphate. Catalyzes the attachment of alanine to tRNA(Ala) in a two-step reaction: alanine is first activated by ATP to form Ala-AMP and then transferred to the acceptor end of tRNA(Ala). Also edits incorrectly charged Ser-tRNA(Ala) and Gly-tRNA(Ala) via its editing domain. The protein is Alanine--tRNA ligase of Synechococcus sp. (strain JA-3-3Ab) (Cyanobacteria bacterium Yellowstone A-Prime).